The chain runs to 401 residues: 8-amino-7-oxononanoate synthase (401 aa).

Arginine 24 provides a ligand contact to substrate. Residue 111 to 112 (GF) participates in pyridoxal 5'-phosphate binding. A substrate-binding site is contributed by histidine 137. Pyridoxal 5'-phosphate contacts are provided by serine 183, histidine 211, and threonine 240. An N6-(pyridoxal phosphate)lysine modification is found at lysine 243. Residue threonine 357 participates in substrate binding.

The protein belongs to the class-II pyridoxal-phosphate-dependent aminotransferase family. BioF subfamily. Homodimer. Pyridoxal 5'-phosphate serves as cofactor.

The enzyme catalyses 6-carboxyhexanoyl-[ACP] + L-alanine + H(+) = (8S)-8-amino-7-oxononanoate + holo-[ACP] + CO2. The protein operates within cofactor biosynthesis; biotin biosynthesis. Its function is as follows. Catalyzes the decarboxylative condensation of pimeloyl-[acyl-carrier protein] and L-alanine to produce 8-amino-7-oxononanoate (AON), [acyl-carrier protein], and carbon dioxide. This is 8-amino-7-oxononanoate synthase from Xanthomonas oryzae pv. oryzae (strain MAFF 311018).